The chain runs to 535 residues: Probable acyl-activating enzyme 22 (535 aa).

This sequence belongs to the ATP-dependent AMP-binding enzyme family.

In terms of biological role, may act as an acid--thiol ligase that activates carboxylic acids by forming acyl-CoAs. The polypeptide is Probable acyl-activating enzyme 22 (AEE22) (Arabidopsis thaliana (Mouse-ear cress)).